A 167-amino-acid polypeptide reads, in one-letter code: Large ribosomal subunit protein uL10 (167 aa).

It belongs to the universal ribosomal protein uL10 family. As to quaternary structure, part of the ribosomal stalk of the 50S ribosomal subunit. The N-terminus interacts with L11 and the large rRNA to form the base of the stalk. The C-terminus forms an elongated spine to which L12 dimers bind in a sequential fashion forming a multimeric L10(L12)X complex.

Forms part of the ribosomal stalk, playing a central role in the interaction of the ribosome with GTP-bound translation factors. This Mycoplasma mobile (strain ATCC 43663 / 163K / NCTC 11711) (Mesomycoplasma mobile) protein is Large ribosomal subunit protein uL10.